Reading from the N-terminus, the 953-residue chain is Eukaryotic translation initiation factor 3 subunit A (953 aa).

Residues 323-504 enclose the PCI domain; it reads LQKMASHVLL…KSISFGLDLH (182 aa). 3 coiled-coil regions span residues 593–642, 670–704, and 732–877; these read QERE…KRQA, MNAD…VDYF, and ENQE…LEER. Residues 603 to 623 are disordered; the sequence is IKKQKVENQEAEQKRLDEERR. Disordered stretches follow at residues 810 to 861 and 893 to 953; these read ERKK…EIDR and GWGD…ITMS. Composition is skewed to basic and acidic residues over residues 812-861, 895-919, and 928-953; these read KKIE…EIDR, GDHE…RGGD, and WQRE…ITMS.

The protein belongs to the eIF-3 subunit A family. Component of the eukaryotic translation initiation factor 3 (eIF-3) complex.

Its subcellular location is the cytoplasm. Functionally, RNA-binding component of the eukaryotic translation initiation factor 3 (eIF-3) complex, which is involved in protein synthesis of a specialized repertoire of mRNAs and, together with other initiation factors, stimulates binding of mRNA and methionyl-tRNAi to the 40S ribosome. The eIF-3 complex specifically targets and initiates translation of a subset of mRNAs involved in cell proliferation. This chain is Eukaryotic translation initiation factor 3 subunit A, found in Nematostella vectensis (Starlet sea anemone).